An 89-amino-acid chain; its full sequence is Elongation factor 1-beta (89 aa).

The protein belongs to the EF-1-beta/EF-1-delta family.

Its function is as follows. Promotes the exchange of GDP for GTP in EF-1-alpha/GDP, thus allowing the regeneration of EF-1-alpha/GTP that could then be used to form the ternary complex EF-1-alpha/GTP/AAtRNA. The protein is Elongation factor 1-beta of Methanococcus aeolicus (strain ATCC BAA-1280 / DSM 17508 / OCM 812 / Nankai-3).